A 330-amino-acid chain; its full sequence is MLAQRIINGENISKEEALSLFVDNNIDTYDLLHEAYQVRKYYYGRKVKLNMILNAKSGICPEDCGYCGQSKLMKNKDKYLLVDSEQIKSGADFCATHDIGTYCIVMSGRGPSDKEVEHIADTVEAIKHEHPQLKICACLGLTNDEQAKKLKLAGVDRYNHNINTSENYHDEVVTTHTYQDRVDTIEIMKANNISPCSGVICGMGETDEDIIDMALALRAIDADSIPVNFLHPVKGTKFGNEDNLTPERCLRILSMFRLINPSKEIRIAGGREVNLRTLQPLAMQAANSIFVGDYLITDGQPNELDYKMLEDLGFEIDINESEINKAALKI.

Residues 42–268 form the Radical SAM core domain; the sequence is YYGRKVKLNM…INPSKEIRIA (227 aa). C60, C64, and C67 together coordinate [4Fe-4S] cluster. Residues C103, C136, C196, and R266 each coordinate [2Fe-2S] cluster.

This sequence belongs to the radical SAM superfamily. Biotin synthase family. Homodimer. It depends on [4Fe-4S] cluster as a cofactor. The cofactor is [2Fe-2S] cluster.

It carries out the reaction (4R,5S)-dethiobiotin + (sulfur carrier)-SH + 2 reduced [2Fe-2S]-[ferredoxin] + 2 S-adenosyl-L-methionine = (sulfur carrier)-H + biotin + 2 5'-deoxyadenosine + 2 L-methionine + 2 oxidized [2Fe-2S]-[ferredoxin]. Its pathway is cofactor biosynthesis; biotin biosynthesis; biotin from 7,8-diaminononanoate: step 2/2. In terms of biological role, catalyzes the conversion of dethiobiotin (DTB) to biotin by the insertion of a sulfur atom into dethiobiotin via a radical-based mechanism. The protein is Biotin synthase of Macrococcus caseolyticus (strain JCSC5402) (Macrococcoides caseolyticum).